Consider the following 533-residue polypeptide: D-3-phosphoglycerate dehydrogenase (533 aa).

A2 carries the post-translational modification N-acetylalanine. S14 is modified (phosphoserine). N6-acetyllysine; alternate is present on K21. A Glycyl lysine isopeptide (Lys-Gly) (interchain with G-Cter in SUMO1); alternate cross-link involves residue K21. Residue K21 forms a Glycyl lysine isopeptide (Lys-Gly) (interchain with G-Cter in SUMO2); alternate linkage. K58 carries the post-translational modification N6-acetyllysine. Residues T78, R155 to I156, D175, T207, C234 to R236, and D260 contribute to the NAD(+) site. T78 carries the post-translational modification Phosphothreonine. The active site involves R236. E265 is an active-site residue. The Proton donor role is filled by H283. H283–A286 serves as a coordination point for NAD(+).

This sequence belongs to the D-isomer specific 2-hydroxyacid dehydrogenase family. In terms of assembly, homotetramer. In terms of tissue distribution, liver, kidney, brain, testis.

It catalyses the reaction (2R)-3-phosphoglycerate + NAD(+) = 3-phosphooxypyruvate + NADH + H(+). It participates in amino-acid biosynthesis; L-serine biosynthesis; L-serine from 3-phospho-D-glycerate: step 1/3. Catalyzes the reversible oxidation of 3-phospho-D-glycerate to 3-phosphonooxypyruvate, the first step of the phosphorylated L-serine biosynthesis pathway. Does not catalyze the reversible oxidation of 2-hydroxyglutarate to 2-oxoglutarate and the reversible oxidation of (S)-malate to oxaloacetate. This Rattus norvegicus (Rat) protein is D-3-phosphoglycerate dehydrogenase (Phgdh).